Consider the following 366-residue polypeptide: Type 2 DNA topoisomerase 6 subunit A (366 aa).

A Topo IIA-type catalytic domain is found at 7-146; that stretch reads SDETEARDQL…FHMRPEESGA (140 aa). Residue Tyr-101 is the O-(5'-phospho-DNA)-tyrosine intermediate of the active site. Mg(2+) contacts are provided by Glu-199 and Asp-251.

This sequence belongs to the TOP6A family. Homodimer. Heterotetramer of two Top6A and two Top6B chains. Requires Mg(2+) as cofactor.

The enzyme catalyses ATP-dependent breakage, passage and rejoining of double-stranded DNA.. In terms of biological role, relaxes both positive and negative superturns and exhibits a strong decatenase activity. This is Type 2 DNA topoisomerase 6 subunit A from Halobacterium salinarum (strain ATCC 700922 / JCM 11081 / NRC-1) (Halobacterium halobium).